A 453-amino-acid chain; its full sequence is Chromosomal replication initiator protein DnaA (453 aa).

The interval 1-73 (MNISPQYLWN…AQEVASVVGY (73 aa)) is domain I, interacts with DnaA modulators. The tract at residues 73-112 (YPVDIQLTTAEGETMAMTGEAQSYQEKSLTQIAPESPKLN) is domain II. Residues 113-329 (QLNPRYTFSR…GALIRAIAYT (217 aa)) form a domain III, AAA+ region region. ATP is bound by residues Gly157, Gly159, Lys160, and Thr161. Residues 330 to 453 (SISGLSMTVQ…RINMASRTQS (124 aa)) are domain IV, binds dsDNA.

This sequence belongs to the DnaA family. Oligomerizes as a right-handed, spiral filament on DNA at oriC.

The protein resides in the cytoplasm. Functionally, plays an essential role in the initiation and regulation of chromosomal replication. ATP-DnaA binds to the origin of replication (oriC) to initiate formation of the DNA replication initiation complex once per cell cycle. Binds the DnaA box (a 9 base pair repeat at the origin) and separates the double-stranded (ds)DNA. Forms a right-handed helical filament on oriC DNA; dsDNA binds to the exterior of the filament while single-stranded (ss)DNA is stabiized in the filament's interior. The ATP-DnaA-oriC complex binds and stabilizes one strand of the AT-rich DNA unwinding element (DUE), permitting loading of DNA polymerase. After initiation quickly degrades to an ADP-DnaA complex that is not apt for DNA replication. Binds acidic phospholipids. This chain is Chromosomal replication initiator protein DnaA, found in Rippkaea orientalis (strain PCC 8801 / RF-1) (Cyanothece sp. (strain PCC 8801)).